We begin with the raw amino-acid sequence, 160 residues long: Cytochrome b6-f complex subunit 4 (160 aa).

Helical transmembrane passes span 36 to 56, 95 to 115, and 131 to 151; these read LLYI…GLAV, LLGV…PFLE, and TVFL…TLPI.

It belongs to the cytochrome b family. PetD subfamily. As to quaternary structure, the 4 large subunits of the cytochrome b6-f complex are cytochrome b6, subunit IV (17 kDa polypeptide, petD), cytochrome f and the Rieske protein, while the 4 small subunits are petG, petL, petM and petN. The complex functions as a dimer.

It is found in the plastid. The protein localises to the chloroplast thylakoid membrane. Functionally, component of the cytochrome b6-f complex, which mediates electron transfer between photosystem II (PSII) and photosystem I (PSI), cyclic electron flow around PSI, and state transitions. The chain is Cytochrome b6-f complex subunit 4 from Coffea arabica (Arabian coffee).